A 143-amino-acid polypeptide reads, in one-letter code: Mini-ribonuclease 3 (143 aa).

The active site involves Asp23.

It belongs to the MrnC RNase family. In terms of assembly, homodimer. Requires Mg(2+) as cofactor.

It is found in the cytoplasm. Involved in correct processing of both the 5' and 3' ends of 23S rRNA precursor. Processes 30S rRNA precursor transcript even in absence of ribonuclease 3 (Rnc); Rnc processes 30S rRNA into smaller rRNA precursors. Cleaves more efficiently on assembled 50S ribosomal subunits. Cleavage is strongly stimulated by ribosomal protein L3 (RplC); 20-30% DMSO can replace RplC, suggesting RplC may alter rRNA conformation. In Bacillus subtilis (strain 168), this protein is Mini-ribonuclease 3 (mrnC).